The primary structure comprises 496 residues: Probable CtpA-like serine protease (496 aa).

Basic and acidic residues predominate over residues Met1 to Glu16. The disordered stretch occupies residues Met1 to Asn27. Residues Asn17 to Asn27 are compositionally biased toward polar residues. The helical transmembrane segment at Phe39–Ile59 threads the bilayer. One can recognise a PDZ domain in the interval Thr124–Gly206. Catalysis depends on charge relay system residues Ser329, Asp340, and Lys354.

It belongs to the peptidase S41A family.

It is found in the cell membrane. This Staphylococcus aureus (strain MRSA252) protein is Probable CtpA-like serine protease.